We begin with the raw amino-acid sequence, 189 residues long: Density-regulated protein homolog (189 aa).

Positions 105-172 constitute an SUI1 domain; that stretch reads ICVSRAARGK…DLFDVIPEKW (68 aa).

This sequence belongs to the DENR family. In terms of assembly, interacts with MCTS1.

Functionally, regulates translation as part of a complex with MCTS1. Specifically required for translational re-initiation in mRNAs containing upstream open reading frames (uORFs). Not required for standard translational initiation. Regulates expression of a subset of gene products including mbc, InR and EcR. The chain is Density-regulated protein homolog from Drosophila melanogaster (Fruit fly).